Consider the following 104-residue polypeptide: Large ribosomal subunit protein uL24 (104 aa).

Belongs to the universal ribosomal protein uL24 family. As to quaternary structure, part of the 50S ribosomal subunit.

One of two assembly initiator proteins, it binds directly to the 5'-end of the 23S rRNA, where it nucleates assembly of the 50S subunit. Its function is as follows. One of the proteins that surrounds the polypeptide exit tunnel on the outside of the subunit. In Erwinia tasmaniensis (strain DSM 17950 / CFBP 7177 / CIP 109463 / NCPPB 4357 / Et1/99), this protein is Large ribosomal subunit protein uL24.